A 159-amino-acid chain; its full sequence is Lipoprotein signal peptidase (159 aa).

The next 2 helical transmembrane spans lie at 59 to 79 (PMIL…YVVF) and 87 to 107 (FLIT…DRIL). Catalysis depends on residues D113 and D139. The helical transmembrane segment at 131–151 (LWPVFNIADSAITIGACVLVI) threads the bilayer.

Belongs to the peptidase A8 family.

It is found in the cell inner membrane. The catalysed reaction is Release of signal peptides from bacterial membrane prolipoproteins. Hydrolyzes -Xaa-Yaa-Zaa-|-(S,diacylglyceryl)Cys-, in which Xaa is hydrophobic (preferably Leu), and Yaa (Ala or Ser) and Zaa (Gly or Ala) have small, neutral side chains.. The protein operates within protein modification; lipoprotein biosynthesis (signal peptide cleavage). Its function is as follows. This protein specifically catalyzes the removal of signal peptides from prolipoproteins. This is Lipoprotein signal peptidase from Chlorobium phaeobacteroides (strain BS1).